Consider the following 282-residue polypeptide: Pantothenate synthetase (282 aa).

Residue Met-30–His-37 coordinates ATP. The Proton donor role is filled by His-37. A (R)-pantoate-binding site is contributed by Gln-61. A beta-alanine-binding site is contributed by Gln-61. Position 147–150 (Gly-147–Asp-150) interacts with ATP. Gln-153 serves as a coordination point for (R)-pantoate. Residues Val-176 and Met-184–Arg-187 each bind ATP.

The protein belongs to the pantothenate synthetase family. In terms of assembly, homodimer.

It is found in the cytoplasm. The enzyme catalyses (R)-pantoate + beta-alanine + ATP = (R)-pantothenate + AMP + diphosphate + H(+). It functions in the pathway cofactor biosynthesis; (R)-pantothenate biosynthesis; (R)-pantothenate from (R)-pantoate and beta-alanine: step 1/1. Functionally, catalyzes the condensation of pantoate with beta-alanine in an ATP-dependent reaction via a pantoyl-adenylate intermediate. The sequence is that of Pantothenate synthetase from Caldicellulosiruptor bescii (strain ATCC BAA-1888 / DSM 6725 / KCTC 15123 / Z-1320) (Anaerocellum thermophilum).